Reading from the N-terminus, the 394-residue chain is Elongation factor Tu (394 aa).

The tr-type G domain maps to 10–204 (KPHVNIGTIG…AVDSYIPQPI (195 aa)). Positions 19-26 (GHVDHGKT) are G1. 19 to 26 (GHVDHGKT) is a GTP binding site. Threonine 26 lines the Mg(2+) pocket. The G2 stretch occupies residues 60–64 (GITIS). The interval 81 to 84 (DCPG) is G3. GTP contacts are provided by residues 81 to 85 (DCPGH) and 136 to 139 (NKVD). Residues 136–139 (NKVD) are G4. The segment at 174–176 (SAL) is G5.

Belongs to the TRAFAC class translation factor GTPase superfamily. Classic translation factor GTPase family. EF-Tu/EF-1A subfamily. In terms of assembly, monomer.

The protein localises to the cytoplasm. It carries out the reaction GTP + H2O = GDP + phosphate + H(+). In terms of biological role, GTP hydrolase that promotes the GTP-dependent binding of aminoacyl-tRNA to the A-site of ribosomes during protein biosynthesis. The polypeptide is Elongation factor Tu (Rickettsia prowazekii (strain Madrid E)).